Consider the following 566-residue polypeptide: Mucolipin-2 (566 aa).

At 1 to 65 (MARQPYRFPQ…YRARRQIPWK (65 aa)) the chain is on the cytoplasmic side. Residues 66-86 (LGLQILKIVMVTTQLVRFGLS) form a helical membrane-spanning segment. The Extracellular portion of the chain corresponds to 87–288 (NQLVVAFKED…IFGSTQKNAQ (202 aa)). The segment at 107–123 (KGYSGTDEDDYSCSVYT) is extracellular/lumenal pore loop. Cystine bridges form between cysteine 164/cysteine 190 and cysteine 243/cysteine 274. A helical membrane pass occupies residues 289-309 (YVLVFDAFVIVICLASLILCT). The Cytoplasmic segment spans residues 310-346 (RSIVLALRLRKRFLNFFLEKYKRPVCDTDQWEFINGW). The helical transmembrane segment at 347–367 (YVLVIISDLMTIIGSILKMEI) threads the bilayer. The Extracellular portion of the chain corresponds to 368–376 (KAKNLTNYD). The chain crosses the membrane as a helical span at residues 377–397 (LCSIFLGTSTLLVWVGVIRYL). Residues 398–419 (GYFQAYNVLILTMQASLPKVLR) are Cytoplasmic-facing. Residues 420–440 (FCACAGMIYLGYTFCGWIVLG) traverse the membrane as a helical segment. Residues 441–448 (PYHDKFEN) are Extracellular-facing. The segment at residues 449–469 (LNTVAECLFSLVNGDDMFATF) is an intramembrane region (pore-forming). The Selectivity filter signature appears at 461 to 464 (NGDD). Residues 470-480 (AQIQQKSILVW) lie on the Extracellular side of the membrane. A helical transmembrane segment spans residues 481–502 (LFSRLYLYSFISLFIYMILSLF). The Cytoplasmic portion of the chain corresponds to 503 to 566 (IALITDSYDT…RSDDHLIPIS (64 aa)).

The protein belongs to the transient receptor (TC 1.A.4) family. Polycystin subfamily. MCOLN2 sub-subfamily. Forms homooligomeric complexes; probably tetrameric. Can heterooligomerize with MCOLN1; heteromeric assemblies have different channel properties as compared to the respective homooligomers and may be tissue-specific. Interacts with TMEM176A.

Its subcellular location is the cell membrane. The protein localises to the late endosome membrane. It localises to the lysosome membrane. It is found in the recycling endosome membrane. It carries out the reaction Ca(2+)(in) = Ca(2+)(out). The enzyme catalyses Fe(2+)(in) = Fe(2+)(out). Its activity is regulated as follows. Channel activity is reduced by low extracellular/lumenal pH level. Nonselective cation channel probably playing a role in the regulation of membrane trafficking events. Acts as a Ca(2+)-permeable cation channel with inwardly rectifying activity. May activate ARF6 and be involved in the trafficking of GPI-anchored cargo proteins to the cell surface via the ARF6-regulated recycling pathway. May play a role in immune processes. In adaptive immunity, TRPML2 and TRPML1 may play redundant roles in the function of the specialized lysosomes of B cells. In the innate immune response, may play a role in the regulation of chemokine secretion and macrophage migration. Through a possible and probably tissue-specific heteromerization with MCOLN1 may be at least in part involved in many lysosome-dependent cellular events. Also functions as a Fe(2+) permeable channel. The polypeptide is Mucolipin-2 (Homo sapiens (Human)).